Consider the following 56-residue polypeptide: Conotoxin reg3.9 (56 aa).

The signal sequence occupies residues 1–8 (LLFPLSAL). The disordered stretch occupies residues 1 to 22 (LLFPLSALPLDGDQPADQPAER). A propeptide spanning residues 9-40 (PLDGDQPADQPAERMQDISPEQNFWFDLVERG) is cleaved from the precursor. 3 cysteine pairs are disulfide-bonded: Cys41–Cys55, Cys42–Cys53, and Cys47–Cys56.

It belongs to the conotoxin M superfamily. In terms of tissue distribution, expressed by the venom duct.

It localises to the secreted. This is Conotoxin reg3.9 from Conus regius (Crown cone).